The primary structure comprises 643 residues: tRNA 5-methylaminomethyl-2-thiouridine biosynthesis bifunctional protein MnmC (643 aa).

The tract at residues 1 to 223 (MPDRLVSATL…VDDRLVGDYA (223 aa)) is tRNA (mnm(5)s(2)U34)-methyltransferase. Residues 247 to 643 (IGAGLAGCAV…LRARRVGSAG (397 aa)) form an FAD-dependent cmnm(5)s(2)U34 oxidoreductase region.

This sequence in the N-terminal section; belongs to the methyltransferase superfamily. tRNA (mnm(5)s(2)U34)-methyltransferase family. The protein in the C-terminal section; belongs to the DAO family. Requires FAD as cofactor.

The protein localises to the cytoplasm. It catalyses the reaction 5-aminomethyl-2-thiouridine(34) in tRNA + S-adenosyl-L-methionine = 5-methylaminomethyl-2-thiouridine(34) in tRNA + S-adenosyl-L-homocysteine + H(+). Its function is as follows. Catalyzes the last two steps in the biosynthesis of 5-methylaminomethyl-2-thiouridine (mnm(5)s(2)U) at the wobble position (U34) in tRNA. Catalyzes the FAD-dependent demodification of cmnm(5)s(2)U34 to nm(5)s(2)U34, followed by the transfer of a methyl group from S-adenosyl-L-methionine to nm(5)s(2)U34, to form mnm(5)s(2)U34. The protein is tRNA 5-methylaminomethyl-2-thiouridine biosynthesis bifunctional protein MnmC of Burkholderia orbicola (strain AU 1054).